The following is a 517-amino-acid chain: Ribose import ATP-binding protein RbsA 2 (517 aa).

ABC transporter domains are found at residues 11–251 (LEMR…VGRD) and 263–507 (YDPG…ALAT). 43–50 (GENGAGKS) serves as a coordination point for ATP.

It belongs to the ABC transporter superfamily. Ribose importer (TC 3.A.1.2.1) family. The complex is composed of an ATP-binding protein (RbsA), two transmembrane proteins (RbsC) and a solute-binding protein (RbsB).

It localises to the cell inner membrane. The catalysed reaction is D-ribose(out) + ATP + H2O = D-ribose(in) + ADP + phosphate + H(+). Its function is as follows. Part of the ABC transporter complex RbsABC involved in ribose import. Responsible for energy coupling to the transport system. This is Ribose import ATP-binding protein RbsA 2 from Burkholderia pseudomallei (strain 1710b).